A 338-amino-acid polypeptide reads, in one-letter code: Fe(3+)-binding periplasmic protein (338 aa).

The signal sequence occupies residues 1-26 (MKLRISSLGPVALLASSMMLAFGAQA). Fe cation contacts are provided by His-40, Glu-88, Tyr-224, and Tyr-225.

The protein belongs to the bacterial solute-binding protein 1 family. In terms of assembly, the complex is composed of two ATP-binding proteins (FbpC), two transmembrane proteins (FbpB) and a solute-binding protein (FbpA).

It localises to the periplasm. Functionally, part of the ABC transporter complex FbpABC (TC 3.A.1.10.1) involved in Fe(3+) ions import. This protein specifically binds Fe(3+) and is involved in its transmembrane transport. The protein is Fe(3+)-binding periplasmic protein (fbpA) of Serratia marcescens.